The sequence spans 222 residues: Cytidylate kinase 2 (222 aa).

7–15 contributes to the ATP binding site; sequence GPSGAGKGT.

Belongs to the cytidylate kinase family. Type 1 subfamily.

The protein resides in the cytoplasm. It catalyses the reaction CMP + ATP = CDP + ADP. It carries out the reaction dCMP + ATP = dCDP + ADP. The chain is Cytidylate kinase 2 from Haemophilus influenzae (strain ATCC 51907 / DSM 11121 / KW20 / Rd).